The following is a 176-amino-acid chain: Transcriptional repressor NrdR (176 aa).

Residues 3 to 34 (CPYCGSLETQVKDSRPTDDASAIRRRRVCPDC) fold into a zinc finger. The ATP-cone domain occupies 49–139 (LTVLKKSGRR…VYRNFREARD (91 aa)). The segment at 147–176 (LDGAAQPEAPSKDDGGTDEPPAKTRAPTRA) is disordered.

This sequence belongs to the NrdR family. Zn(2+) serves as cofactor.

Negatively regulates transcription of bacterial ribonucleotide reductase nrd genes and operons by binding to NrdR-boxes. This Methylocella silvestris (strain DSM 15510 / CIP 108128 / LMG 27833 / NCIMB 13906 / BL2) protein is Transcriptional repressor NrdR.